Reading from the N-terminus, the 1232-residue chain is Anion exchange protein 3 (1232 aa).

Positions 1–11 are enriched in pro residues; sequence MANGVIPPPGG. Disordered stretches follow at residues 1 to 316 and 429 to 499; these read MANG…KLDR and NDDK…DSHR. The Cytoplasmic portion of the chain corresponds to 1–708; sequence MANGVIPPPG…DLRDALHSQC (708 aa). Over residues 58–75 the composition is skewed to basic and acidic residues; it reads DPEKPSRSYSERDFEFHR. Basic residues-rich tracts occupy residues 76–97 and 104–113; these read HTSHHTHHPLSARLPPPHKLRR and RHTRRKRKKE. The span at 134 to 152 shows a compositional bias: acidic residues; the sequence is VDEEEEEEEEEEGESEAEP. Phosphoserine is present on residues Ser167, Ser170, Ser175, and Ser198. The span at 267-279 shows a compositional bias: basic and acidic residues; it reads DDMKSHRLEDNPG. The segment covering 280–289 has biased composition (basic residues); the sequence is VRRHLVKKPS. Arg295 bears the Omega-N-methylarginine mark. Residues 305-316 show a composition bias toward basic residues; that stretch reads LRRKKKKKKLDR. Residues 440–450 show a composition bias toward polar residues; that stretch reads NPSSSSMNSVL. Positions 481 to 499 are enriched in basic and acidic residues; it reads HDPDAKEKPLHMPGGDSHR. 5 helical membrane passes run 709-731, 737-774, 794-816, 826-847, and 893-910; these read VAAVLFIYFAALSPAITFGGLLG, LMGVSELIVSTAVLGVLFSLLGAQPLLVVGFSGPLLVF, VWVGLWLVVFVLALVAAEGSFLV, IFAFLISLIFIYETFYKLYKVF, and ALLSLILMLGTFFIAFFL. Residues 709-1232 form a membrane (anion exchange) region; that stretch reads VAAVLFIYFA…DEYNELHMPV (524 aa). The Cytoplasmic segment spans residues 911-925; it reads RKFRNSRFLGGKARR. 5 helical membrane-spanning segments follow: residues 926-946, 980-1002, 1028-1049, 1083-1128, and 1155-1191; these read IIGDFGIPISILVMVLVDYSI, PFPPWMMVAAAVPALLVLILIFM, LLLIGSLGGLCGLFGLPWLTAA, VTGV…IQLS, and MHLFTCIQLGCIALLWVVKSTAASLAFPFLLLLTVPL. Cys1165 is lipidated: S-palmitoyl cysteine.

This sequence belongs to the anion exchanger (TC 2.A.31) family.

The protein localises to the cell membrane. The catalysed reaction is hydrogencarbonate(in) + chloride(out) = hydrogencarbonate(out) + chloride(in). Sodium-independent anion exchanger which mediates the electroneutral exchange of chloride for bicarbonate ions across the cell membrane. May be involved in the regulation of intracellular pH, and the modulation of cardiac action potential. In Plecturocebus moloch (Dusky titi monkey), this protein is Anion exchange protein 3 (SLC4A3).